A 500-amino-acid chain; its full sequence is Probable cytosol aminopeptidase (500 aa).

2 residues coordinate Mn(2+): Lys268 and Asp273. Lys280 is a catalytic residue. 3 residues coordinate Mn(2+): Asp291, Asp350, and Glu352. The active site involves Arg354.

This sequence belongs to the peptidase M17 family. It depends on Mn(2+) as a cofactor.

The protein localises to the cytoplasm. It carries out the reaction Release of an N-terminal amino acid, Xaa-|-Yaa-, in which Xaa is preferably Leu, but may be other amino acids including Pro although not Arg or Lys, and Yaa may be Pro. Amino acid amides and methyl esters are also readily hydrolyzed, but rates on arylamides are exceedingly low.. The enzyme catalyses Release of an N-terminal amino acid, preferentially leucine, but not glutamic or aspartic acids.. Functionally, presumably involved in the processing and regular turnover of intracellular proteins. Catalyzes the removal of unsubstituted N-terminal amino acids from various peptides. This chain is Probable cytosol aminopeptidase, found in Azoarcus sp. (strain BH72).